Here is a 149-residue protein sequence, read N- to C-terminus: MLEAWQIQEIIPHRYPFLLVDRIIEIEWGQRAVGIKNVTVNEPFFVGHFPGNPVMPGVLIIEALAQVGAVALLGHPQYRDKTAFFAGIDGVRFKRPVRPGDTLRLEVQIGKVRRNIGTGTGRATVDGELAAEGEILFALLDPEAARTTR.

H48 is a catalytic residue.

This sequence belongs to the thioester dehydratase family. FabZ subfamily.

The protein resides in the cytoplasm. The enzyme catalyses a (3R)-hydroxyacyl-[ACP] = a (2E)-enoyl-[ACP] + H2O. In terms of biological role, involved in unsaturated fatty acids biosynthesis. Catalyzes the dehydration of short chain beta-hydroxyacyl-ACPs and long chain saturated and unsaturated beta-hydroxyacyl-ACPs. The sequence is that of 3-hydroxyacyl-[acyl-carrier-protein] dehydratase FabZ from Thermomicrobium roseum (strain ATCC 27502 / DSM 5159 / P-2).